We begin with the raw amino-acid sequence, 381 residues long: Probable tRNA sulfurtransferase (381 aa).

The THUMP domain maps to 52–155 (LTNLDALKYV…DASTYIFIDY (104 aa)). Residues 173–174 (LM), 198–199 (NF), Arg255, Gly277, and Gln286 each bind ATP.

The protein belongs to the ThiI family.

The protein resides in the cytoplasm. The enzyme catalyses [ThiI sulfur-carrier protein]-S-sulfanyl-L-cysteine + a uridine in tRNA + 2 reduced [2Fe-2S]-[ferredoxin] + ATP + H(+) = [ThiI sulfur-carrier protein]-L-cysteine + a 4-thiouridine in tRNA + 2 oxidized [2Fe-2S]-[ferredoxin] + AMP + diphosphate. The catalysed reaction is [ThiS sulfur-carrier protein]-C-terminal Gly-Gly-AMP + S-sulfanyl-L-cysteinyl-[cysteine desulfurase] + AH2 = [ThiS sulfur-carrier protein]-C-terminal-Gly-aminoethanethioate + L-cysteinyl-[cysteine desulfurase] + A + AMP + 2 H(+). Its pathway is cofactor biosynthesis; thiamine diphosphate biosynthesis. Catalyzes the ATP-dependent transfer of a sulfur to tRNA to produce 4-thiouridine in position 8 of tRNAs, which functions as a near-UV photosensor. Also catalyzes the transfer of sulfur to the sulfur carrier protein ThiS, forming ThiS-thiocarboxylate. This is a step in the synthesis of thiazole, in the thiamine biosynthesis pathway. The sulfur is donated as persulfide by IscS. This is Probable tRNA sulfurtransferase from Metamycoplasma arthritidis (strain 158L3-1) (Mycoplasma arthritidis).